The following is a 61-amino-acid chain: Weak toxin CM-2 (61 aa).

4 cysteine pairs are disulfide-bonded: C3–C21, C14–C37, C41–C53, and C54–C59.

Belongs to the three-finger toxin family. Short-chain subfamily. Orphan group VI sub-subfamily. In terms of tissue distribution, expressed by the venom gland.

Its subcellular location is the secreted. This Naja haje haje (Egyptian cobra) protein is Weak toxin CM-2.